A 274-amino-acid chain; its full sequence is MQNITQSWFVQGMIKATTDAWLKGWDERNGGNLTLRLDDADIAPYHGNFHAQPRYIPLSQPMPLLANTPFIVTGSGKFFRNVQLDPAANLGVVKVDSDGAGYHILWGLTNEAVPTSELPAHFLSHCERIKATNGKDRVIMHCHATNLIALTYVLENDTAVFTRQLWEGSTECLVVFPDGVGILPWMVPGTDEIGQATAQEMQKHSLVLWPFHGVFSSGPTLDETFGLIDTAEKSAQVLVKGYSMGGMKQTISREELIALGQRFGVTPLASALAL.

The active site involves glutamate 117. The Zn(2+) site is built by histidine 141, histidine 143, and histidine 212.

The protein belongs to the aldolase class II family. RhaD subfamily. Homotetramer. Requires Zn(2+) as cofactor.

It is found in the cytoplasm. It carries out the reaction L-rhamnulose 1-phosphate = (S)-lactaldehyde + dihydroxyacetone phosphate. It participates in carbohydrate degradation; L-rhamnose degradation; glycerone phosphate from L-rhamnose: step 3/3. Its function is as follows. Catalyzes the reversible cleavage of L-rhamnulose-1-phosphate to dihydroxyacetone phosphate (DHAP) and L-lactaldehyde. In Escherichia coli O7:K1 (strain IAI39 / ExPEC), this protein is Rhamnulose-1-phosphate aldolase.